Reading from the N-terminus, the 72-residue chain is Putative membrane protein insertion efficiency factor (72 aa).

Belongs to the UPF0161 family.

It localises to the cell inner membrane. In terms of biological role, could be involved in insertion of integral membrane proteins into the membrane. The sequence is that of Putative membrane protein insertion efficiency factor from Trichodesmium erythraeum (strain IMS101).